Reading from the N-terminus, the 54-residue chain is Preprotein translocase subunit SecG (54 aa).

Over 1 to 31 the chain is Cytoplasmic; it reads MSSGQNSGGLMSSAGLVRYFDAEDRNSIRID. Residues 32–53 traverse the membrane as a helical segment; sequence PKTIVAFGVLFGVGVLVLNALA. Residue I54 is a topological domain, extracellular.

Belongs to the SEC61-beta family. Component of the protein translocase complex. Heterotrimer consisting of alpha (SecY), beta (SecG) and gamma (SecE) subunits. Can form oligomers of the heterotrimer.

The protein resides in the cell membrane. Its function is as follows. Involved in protein export. The function of the beta subunit is unknown, but it may be involved in stabilization of the trimeric complex. This is Preprotein translocase subunit SecG from Haloquadratum walsbyi (strain DSM 16790 / HBSQ001).